We begin with the raw amino-acid sequence, 460 residues long: Nitrogenase iron-iron protein beta chain (460 aa).

[8Fe-7S] cluster contacts are provided by Cys-20, Cys-45, Cys-104, and Ser-143.

The protein belongs to the NifD/NifK/NifE/NifN family. In terms of assembly, hexamer of two alpha, two beta, and two delta chains. Requires [8Fe-7S] cluster as cofactor.

It carries out the reaction N2 + 8 reduced [2Fe-2S]-[ferredoxin] + 16 ATP + 16 H2O = H2 + 8 oxidized [2Fe-2S]-[ferredoxin] + 2 NH4(+) + 16 ADP + 16 phosphate + 6 H(+). Its function is as follows. This iron-iron protein is part of the nitrogenase complex that catalyzes the key enzymatic reactions in nitrogen fixation. Other nitrogenase complexes utilize a molybdenum-iron protein or a vanadium-iron protein. The protein is Nitrogenase iron-iron protein beta chain (anfK) of Rhodobacter capsulatus (Rhodopseudomonas capsulata).